Here is an 819-residue protein sequence, read N- to C-terminus: Ferric-pyoverdine 358 receptor (819 aa).

Positions 1-47 are cleaved as a signal peptide; the sequence is MSKPLPSALNPLAKALLIRHSLRPRHALSRIGMGLALSSALVFQVQA. A TonB box motif is present at residues 115 to 122; that stretch reads NTVTVTAS. Positions 166–276 constitute a TBDR plug domain; the sequence is SIRETPQTIT…PSAVVNVIRK (111 aa). The TBDR beta-barrel domain occupies 281-819; the sequence is EFKSHIQAGV…NATVTLRYDF (539 aa). The TonB C-terminal box motif lies at 802–819; that stretch reads YGHYGAPRNATVTLRYDF.

Belongs to the TonB-dependent receptor family.

Its subcellular location is the cell outer membrane. In terms of biological role, specific receptor for the siderophore ferric pyoverdine (pseudobactin) 358. This is Ferric-pyoverdine 358 receptor (pupA) from Pseudomonas putida (Arthrobacter siderocapsulatus).